Here is a 159-residue protein sequence, read N- to C-terminus: Dehydratase GME11372 (159 aa).

Catalysis depends on residues His79 and His104.

This sequence belongs to the scytalone dehydratase family. As to quaternary structure, homotrimer. Each subunit contains an active site, located in the central part of the hydrophobic core of the monomer, which functions independently.

Its pathway is secondary metabolite biosynthesis. Dehydratase; part of the gene cluster that mediates the biosynthesis of dibenzodioxocinones such as pestalotiollide B, a novel class of inhibitors against cholesterol ester transfer protein (CEPT). The biosynthesis initiates from condensation of acetate and malonate units catalyzed by the non-reducing PKS pks8/GME11356. Pks8/GME11356 lacks a thioesterase (TE) domain, which is important to the cyclizing of the third ring of atrochrysone carboxylic acid, and the esterase GME11355 might play the role of TE and catalyzes the cyclization reaction of the C ring. The lactamase-like protein GME11357 (or other beta-lactamases in Pestalotiopsis microspora) probably hydrolyzes the thioester bond between the ACP of pks8/GME11356 and the intermediate to release atrochrysone carboxylic acid, which is spontaneously dehydrates to form endocrocin anthrone. Endocrocin anthrone is further converted to emodin via the endocrocin intermediate. Emodin is then oxidized by several enzymes such as the Baeyer-Villiger oxidase GME11358, the oxidoreductase GME11367, the short chain dehydrogenase/reductase GME11373, as well as by other oxidoreductases from the cluster, to modify the A and C rings and open the B ring, and finally yield monodictyphenone. The prenyltransferase GME11375 may catalyze the addition reaction between the C5 side chains and the carbon bone of dibenzodioxocinones. The remaining biochemical reactions to the final product dibenzodioxocinones should be methylation catalyzed by methyltransferase GME11366 and reduction and lactonization reaction catalyzed by a series of oxidordeuctases. This Pestalotiopsis microspora protein is Dehydratase GME11372.